The following is a 375-amino-acid chain: Meiotic driver cw27 (375 aa).

Disordered regions lie at residues 1-42 (MKNK…STLP) and 74-103 (DYDENRLLITDEGNNPPNTHRENHSSGTTD). Basic and acidic residues predominate over residues 11–29 (SMDELSTKNDNEIDLEKGP). Helical transmembrane passes span 108–128 (FLIKLLISFTSIILFNAPAVC), 145–165 (WTLIGFWCASSLIIFTFSWCF), 172–192 (AVKVTVIFLAQCIKVTAISLA), 208–228 (EMMIIIWILWLIICCILFGCV), 245–265 (TISAVLFLIVSSVCIPIWTLW), 272–292 (LQVLGIHGIIALLVNGLMSLF), and 336–356 (VIGFILGGIANAIGGIANAIG).

Belongs to the WTF family. Homomer. Forms protein aggregates. The two isoforms can interact with each other and with themselves. High sequence similarity is required for their interaction.

It localises to the spore membrane. The protein resides in the vacuole. The protein localises to the membrane. Its subcellular location is the ascus epiplasm. It is found in the cytoplasm. It localises to the endoplasmic reticulum. Promotes unequal transmission of alleles from the parental zygote to progeny spores by acting as poison/antidote system where the poison and antidote proteins are produced from the same locus; the poison component is trans-acting and targets all spores within an ascus whereas the antidote component is spore-specific, leading to poisoning of all progeny that do not inherit the allele. Its function is as follows. Localizes isoform 2 to the vacuole thereby facilitating its degradation. In terms of biological role, forms toxic aggregates that disrupt spore maturation. This is Meiotic driver cw27 from Schizosaccharomyces pombe (Fission yeast).